The following is a 360-amino-acid chain: sn-glycerol-3-phosphate import ATP-binding protein UgpC (360 aa).

The 232-residue stretch at 4-235 (LSLKGVKKSY…PATTFVASFI (232 aa)) folds into the ABC transporter domain. 37 to 44 (GPSGCGKS) is a binding site for ATP.

Belongs to the ABC transporter superfamily. sn-glycerol-3-phosphate importer (TC 3.A.1.1.3) family. The complex is composed of two ATP-binding proteins (UgpC), two transmembrane proteins (UgpA and UgpE) and a solute-binding protein (UgpB).

It is found in the cell inner membrane. It catalyses the reaction sn-glycerol 3-phosphate(out) + ATP + H2O = sn-glycerol 3-phosphate(in) + ADP + phosphate + H(+). Part of the ABC transporter complex UgpBAEC involved in sn-glycerol-3-phosphate (G3P) import. Responsible for energy coupling to the transport system. This is sn-glycerol-3-phosphate import ATP-binding protein UgpC from Burkholderia mallei (strain ATCC 23344).